Consider the following 373-residue polypeptide: MAQIDIRQVRKSYGKTPTLHGVDLSFDSGEFVVILGPSGCGKSTLLRMIAGLEEITSGEIAIGGRVVNTLEPRERGCAMVFQNYALYPHMSVAANIGYALKVAGVPKAERQRRIEETAKIVGLSDYLERKPAALSGGQRQRVAMARAIIREPAVFLFDEPLSNLDAKLRVSMRAEIRKLHQRLSATSIFVTHDQVEAMTLADRLVVMNKGNVEQVGHPLDIYHRPASTFVASFIGSPAMNLFTTKVEVETPAVILSGTPVKLFPETALELRGRNVTVGIRPEQCVVSMDGPGVPAIVDFVEELGSGRIVHADIAGETFSAAIGEDLLVKPGQRIHLDLPTAHLHFFDPATGKRIETEGTAETARSKNETLLAV.

The region spanning 4-234 (IDIRQVRKSY…PASTFVASFI (231 aa)) is the ABC transporter domain. ATP is bound at residue 36–43 (GPSGCGKS).

This sequence belongs to the ABC transporter superfamily. sn-glycerol-3-phosphate importer (TC 3.A.1.1.3) family. As to quaternary structure, the complex is composed of two ATP-binding proteins (UgpC), two transmembrane proteins (UgpA and UgpE) and a solute-binding protein (UgpB).

It localises to the cell inner membrane. The enzyme catalyses sn-glycerol 3-phosphate(out) + ATP + H2O = sn-glycerol 3-phosphate(in) + ADP + phosphate + H(+). In terms of biological role, part of the ABC transporter complex UgpBAEC involved in sn-glycerol-3-phosphate (G3P) import. Responsible for energy coupling to the transport system. This is sn-glycerol-3-phosphate import ATP-binding protein UgpC 2 from Agrobacterium fabrum (strain C58 / ATCC 33970) (Agrobacterium tumefaciens (strain C58)).